A 128-amino-acid chain; its full sequence is Large ribosomal subunit protein bL17 (128 aa).

The protein belongs to the bacterial ribosomal protein bL17 family. In terms of assembly, part of the 50S ribosomal subunit. Contacts protein L32.

The sequence is that of Large ribosomal subunit protein bL17 from Glaesserella parasuis serovar 5 (strain SH0165) (Haemophilus parasuis).